We begin with the raw amino-acid sequence, 768 residues long: Cullin-3 (768 aa).

At Ser-2 the chain carries N-acetylserine. The interval 2 to 41 is interaction with KLHL18; it reads SNLSKGTGSRKDTKMRIRAFPMTMDEKYVNSIWDLLKNAI. A Phosphoserine modification is found at Ser-585. Residues 677–698 form a disordered region; it reads VAAKQGESDPERKETRQKVDDD. Over residues 682-698 the composition is skewed to basic and acidic residues; the sequence is GESDPERKETRQKVDDD. Residues 698–760 enclose the Cullin neddylation domain; it reads DRKHEIEAAI…REYLARTPED (63 aa). Residue Lys-712 forms a Glycyl lysine isopeptide (Lys-Gly) (interchain with G-Cter in NEDD8) linkage.

This sequence belongs to the cullin family. Forms neddylation-dependent homodimers. Component of multiple BCR (BTB-CUL3-RBX1) E3 ubiquitin-protein ligase complexes formed of CUL3, RBX1 and a variable BTB domain-containing protein acting as both, adapter to cullin and substrate recognition subunit. The BCR complex may be active as a heterodimeric complex, in which NEDD8, covalently attached to one CUL3 molecule, binds to the C-terminus of a second CUL3 molecule. Interacts with RBX1, RNF7, CYCE and TIP120A/CAND1. Part of the BCR(SPOP) containing SPOP, and of BCR containing homodimeric SPOPL or the heterodimer formed by SPOP and SPOPL. Part of the probable BCR(KLHL9-KLHL13) complex with BTB domain proteins KLHL9 and KLHL13. Part of the BCR(KLHL41) complex containing KLHL41. Component of the BCR(KLHL12) E3 ubiquitin ligase complex, at least composed of CUL3 and KLHL12 and RBX1. Component of the BCR(KLHL3) E3 ubiquitin ligase complex, at least composed of CUL3 and KLHL3 and RBX1. Part of the BCR(ENC1) complex containing ENC1. Part of a complex consisting of BMI1/PCGF4, CUL3 and SPOP. Part of a complex consisting of BRMS1, CUL3 and SPOP. Component of the BCR(KLHL21) E3 ubiquitin ligase complex, at least composed of CUL3, KLHL21 and RBX1. Component of the BCR(KLHL22) E3 ubiquitin ligase complex, at least composed of CUL3, KLHL22 and RBX1. Component of the BCR(KLHL25) E3 ubiquitin ligase complex, at least composed of CUL3, KLHL25 and RBX1. Part of a complex consisting of MACROH2A1, CUL3 and SPOP. Component of the BCR(KLHL42) E3 ubiquitin ligase complex, at least composed of CUL3 and KLHL42. Interacts with KLHL42 (via the BTB domain). Interacts with KATNA1; the interaction is enhanced by KLHL42. Component of the BCR(KBTBD8) E3 ubiquitin ligase complex, at least composed of CUL3, KBTBD8 and RBX1. Interacts with KCTD5, KLHL9, KLHL11, KLHL13, GAN, ZBTB16, KLHL3, KLHL15, KLHL20, KLHL36, GMCL2, BTBD1. Part of a complex that contains CUL3, RBX1 and GAN. Interacts (via BTB domain) with KLHL17; the interaction regulates surface GRIK2 expression. Interacts with KCTD7. Part of the BCR(GAN) complex containing GAN. Part of the BCR(KEAP1) complex containing KEAP1. Interacts with KLHL10. Interacts with KAT5 and ATF2. Interacts with KCTD17 in the BCR(KCTD17) E3 ubiquitin ligase complex, at least composed of CUL3, KCTD17 and RBX1. Interacts (when neddylated) with ARIH1; leading to activate the E3 ligase activity of ARIH1. Interacts with COPS9 isoform 2. Interacts with PPP2R5B; this interaction is indirect and mediated through KLHL15-binding and leads to PPP2R5B proteasomal degradation. Interacts with RBBP8/CtIP; this interaction is indirect and mediated through KLHL15-binding and leads to RBBP8 proteasomal degradation. Interacts with KLHL24 in the BCR(KLHL24) E3 ubiquitin ligase complex, composed of CUL3, RBX1 and KLHL24. Interacts with RHOBTB2. Interacts with AURKA and KLHL18 (via BTB domain). Interacts (unneddylated form) with DCUN1D1, DCUN1D2, DCUN1D3, DCUN1D4 and DCUN1D5; these interactions promote the cullin neddylation. Component of a BCR3 (BTB-CUL3-RBX1) E3 ubiquitin ligase complex, also named Cul3-RING ubiquitin ligase complex CUL3(KBTBD6/7), composed of CUL3, RBX1, KBTBD6 and KBTBD7. Component of the BCR(KBTBD2) E3 ubiquitin ligase complex, at least composed of CUL3, KBTBD2 and RBX1. Interacts with KBTBD2 (via the BTB domain). Component of the BCR(KBTBD4) E3 ubiquitin ligase complex, at least composed of CUL3, KBTBD4 and RBX1. Component of the BCR(ARMC5) E3 ubiquitin ligase complex, composed of CUL3, ARMC5 and RBX1. Post-translationally, neddylated. Attachment of NEDD8 is required for the E3 ubiquitin-protein ligase activity of the BCR complex. Deneddylated via its interaction with the COP9 signalosome (CSN) complex. Brain, spermatozoa, and testis (at protein level). Widely expressed.

Its subcellular location is the nucleus. The protein resides in the golgi apparatus. The protein localises to the cell projection. It localises to the cilium. It is found in the flagellum. Its subcellular location is the cytoplasm. The protein resides in the cytoskeleton. The protein localises to the spindle. It localises to the microtubule organizing center. It is found in the centrosome. Its subcellular location is the spindle pole. The protein operates within protein modification; protein ubiquitination. Functionally, core component of multiple cullin-RING-based BCR (BTB-CUL3-RBX1) E3 ubiquitin-protein ligase complexes which mediate the ubiquitination and subsequent proteasomal degradation of target proteins. BCR complexes and ARIH1 collaborate in tandem to mediate ubiquitination of target proteins. As a scaffold protein may contribute to catalysis through positioning of the substrate and the ubiquitin-conjugating enzyme. The E3 ubiquitin-protein ligase activity of the complex is dependent on the neddylation of the cullin subunit and is inhibited by the association of the deneddylated cullin subunit with TIP120A/CAND1. The functional specificity of the BCR complex depends on the BTB domain-containing protein as the substrate recognition component. BCR(KLHL42) is involved in ubiquitination of KATNA1. BCR(SPOP) is involved in ubiquitination of BMI1/PCGF4, BRMS1, MACROH2A1 and DAXX, GLI2 and GLI3. Can also form a cullin-RING-based BCR (BTB-CUL3-RBX1) E3 ubiquitin-protein ligase complex containing homodimeric SPOPL or the heterodimer formed by SPOP and SPOPL; these complexes have lower ubiquitin ligase activity. BCR(KLHL9-KLHL13) controls the dynamic behavior of AURKB on mitotic chromosomes and thereby coordinates faithful mitotic progression and completion of cytokinesis. BCR(KLHL12) is involved in ER-Golgi transport by regulating the size of COPII coats, thereby playing a key role in collagen export, which is required for embryonic stem (ES) cells division: BCR(KLHL12) acts by mediating monoubiquitination of SEC31 (SEC31A or SEC31B). BCR(KLHL3) acts as a regulator of ion transport in the distal nephron; by mediating ubiquitination of WNK4. The BCR(KLHL20) E3 ubiquitin ligase complex is involved in interferon response and anterograde Golgi to endosome transport: it mediates both ubiquitination leading to degradation and 'Lys-33'-linked ubiquitination. The BCR(KLHL21) E3 ubiquitin ligase complex regulates localization of the chromosomal passenger complex (CPC) from chromosomes to the spindle midzone in anaphase and mediates the ubiquitination of AURKB. The BCR(KLHL22) ubiquitin ligase complex mediates monoubiquitination of PLK1, leading to PLK1 dissociation from phosphoreceptor proteins and subsequent removal from kinetochores, allowing silencing of the spindle assembly checkpoint (SAC) and chromosome segregation. The BCR(KLHL22) ubiquitin ligase complex is also responsible for the amino acid-stimulated 'Lys-48' polyubiquitination and proteasomal degradation of DEPDC5. Through the degradation of DEPDC5, releases the GATOR1 complex-mediated inhibition of the TORC1 pathway. The BCR(KLHL25) ubiquitin ligase complex is involved in translational homeostasis by mediating ubiquitination and subsequent degradation of hypophosphorylated EIF4EBP1 (4E-BP1). The BCR(KLHL25) ubiquitin ligase complex is also involved in lipid synthesis by mediating ubiquitination and degradation of ACLY. The BCR(KBTBD8) complex acts by mediating monoubiquitination of NOLC1 and TCOF1, leading to remodel the translational program of differentiating cells in favor of neural crest specification. Involved in ubiquitination of cyclin E and of cyclin D1 (in vitro) thus involved in regulation of G1/S transition. Involved in the ubiquitination of KEAP1, ENC1 and KLHL41. In concert with ATF2 and RBX1, promotes degradation of KAT5 thereby attenuating its ability to acetylate and activate ATM. The BCR(KCTD17) E3 ubiquitin ligase complex mediates ubiquitination and degradation of TCHP, a down-regulator of cilium assembly, thereby inducing ciliogenesis. The BCR(KLHL24) E3 ubiquitin ligase complex mediates ubiquitination of KRT14, controls KRT14 levels during keratinocytes differentiation, and is essential for skin integrity. The BCR(KLHL18) E3 ubiquitin ligase complex mediates the ubiquitination of AURKA leading to its activation at the centrosome which is required for initiating mitotic entry. The BCR(KEAP1) E3 ubiquitin ligase complex acts as a key sensor of oxidative and electrophilic stress by mediating ubiquitination and degradation of NFE2L2/NRF2, a transcription factor regulating expression of many cytoprotective genes. As part of the CUL3(KBTBD6/7) E3 ubiquitin ligase complex functions mediates 'Lys-48' ubiquitination and proteasomal degradation of TIAM1. By controlling the ubiquitination of that RAC1 guanine exchange factors (GEF), regulates RAC1 signal transduction and downstream biological processes including the organization of the cytoskeleton, cell migration and cell proliferation. The BCR(KBTBD4) E3 ubiquitin ligase complex targets CoREST corepressor complex components RCOR1, KDM1A/LSD1 and HDAC2 for proteasomal degradation with RCOR1 likely to be the primary target while degradation of KDM1A and HDAC2 is likely due to their association with RCOR1. It also targets RCOR3, MIER2 and MIER3 for proteasomal degradation as well as associated proteins ZNF217 and RREB1 with degradation being dependent on the presence of an ELM2 domain in the target proteins. The BCR(ARMC5) complex mediates premature transcription termination of transcripts that are unfavorably configured for transcriptional elongation by mediating ubiquitination of Pol II subunit POLR2A. Required for 'Lys-63'-linked ubiquitination of large ribosomal subunit protein MRPL12. In Homo sapiens (Human), this protein is Cullin-3.